The following is a 149-amino-acid chain: Large ribosomal subunit protein bL9 (149 aa).

This sequence belongs to the bacterial ribosomal protein bL9 family.

Binds to the 23S rRNA. This is Large ribosomal subunit protein bL9 from Legionella pneumophila (strain Lens).